Here is a 483-residue protein sequence, read N- to C-terminus: Arginine/agmatine antiporter (483 aa).

12 consecutive transmembrane segments (helical) span residues 11–31 (ILGTLALTGIVISSMIGGGIF), 41–61 (ASAGAVMLAWMLSGIGIFFIA), 85–105 (GFGPYVGFTIAWGYWLCQIFG), 124–144 (YFAGGNTIPAILLGSLLIWIF), 157–177 (FVNIIGAVCTLIPLLLFILIT), 208–228 (STMLVTLWAFIGIEGAVVISG), 239–259 (ATILGFSGCLLIYVLLSLLPF), 289–309 (VLMNTGLLIAVLTSWLSWTIL), 336–356 (PSFSLFMTSGLMQITMLLVYF), 364–384 (MLEITGVMVLPAYLTSSLFLV), 415–435 (LWLIYAGGLQHLFMVAILLAL), and 458–478 (EILKMTIVALAALLAIFLFSA).

The protein belongs to the amino acid-polyamine-organocation (APC) superfamily. Basic amino acid/polyamine antiporter (APA) (TC 2.A.3.2) family.

The protein resides in the cell inner membrane. Catalyzes the exchange of L-arginine for agmatine. The arginine uptake by the bacterium in the macrophage may be a virulence factor against the host innate immune response. This Chlamydia trachomatis serovar A (strain ATCC VR-571B / DSM 19440 / HAR-13) protein is Arginine/agmatine antiporter (aaxC).